The following is a 272-amino-acid chain: Sulfur carrier protein FdhD (272 aa).

Cys-114 acts as the Cysteine persulfide intermediate in catalysis.

It belongs to the FdhD family.

The protein localises to the cytoplasm. Required for formate dehydrogenase (FDH) activity. Acts as a sulfur carrier protein that transfers sulfur from IscS to the molybdenum cofactor prior to its insertion into FDH. The protein is Sulfur carrier protein FdhD of Mycolicibacterium paratuberculosis (strain ATCC BAA-968 / K-10) (Mycobacterium paratuberculosis).